The primary structure comprises 546 residues: Probable protein kinase UbiB (546 aa).

Residues 124–502 (DFSVEPLASA…HVRQGQSRYL (379 aa)) form the Protein kinase domain. Residues 130–138 (LASASIAQV) and Lys-153 each bind ATP. The Proton acceptor role is filled by Asp-288. The next 2 helical transmembrane spans lie at 501-521 (YLFGIGAVLLLSGTLLFIHRP) and 522-542 (EWGMMPGWLMAGGVVTWLIGW).

It belongs to the ABC1 family. UbiB subfamily.

It localises to the cell inner membrane. It functions in the pathway cofactor biosynthesis; ubiquinone biosynthesis [regulation]. Functionally, is probably a protein kinase regulator of UbiI activity which is involved in aerobic coenzyme Q (ubiquinone) biosynthesis. This chain is Probable protein kinase UbiB, found in Klebsiella pneumoniae (strain 342).